Reading from the N-terminus, the 196-residue chain is Carnitine operon protein CaiE (196 aa).

Residues 173-196 (TQPLRQMEENRPRLQGTTDVTPKR) form a disordered region. A compositionally biased stretch (polar residues) spans 187-196 (QGTTDVTPKR).

The protein belongs to the transferase hexapeptide repeat family.

The protein operates within amine and polyamine metabolism; carnitine metabolism. Its function is as follows. Overproduction of CaiE stimulates the activity of CaiB and CaiD. The chain is Carnitine operon protein CaiE from Escherichia coli O157:H7.